The sequence spans 459 residues: tRNA modification GTPase MnmE (459 aa).

(6S)-5-formyl-5,6,7,8-tetrahydrofolate contacts are provided by arginine 20, glutamate 85, and arginine 124. Positions 221 to 380 constitute a TrmE-type G domain; the sequence is GLSTVIIGRP…LEEAIQSLFY (160 aa). Residue asparagine 231 coordinates K(+). Residues 231 to 236, 250 to 256, and 275 to 278 contribute to the GTP site; these read NVGKSS, TDIPGTT, and DTAG. Serine 235 is a Mg(2+) binding site. K(+) is bound by residues threonine 250, isoleucine 252, and threonine 255. Position 256 (threonine 256) interacts with Mg(2+). Lysine 459 lines the (6S)-5-formyl-5,6,7,8-tetrahydrofolate pocket.

Belongs to the TRAFAC class TrmE-Era-EngA-EngB-Septin-like GTPase superfamily. TrmE GTPase family. In terms of assembly, homodimer. Heterotetramer of two MnmE and two MnmG subunits. K(+) is required as a cofactor.

The protein resides in the cytoplasm. Exhibits a very high intrinsic GTPase hydrolysis rate. Involved in the addition of a carboxymethylaminomethyl (cmnm) group at the wobble position (U34) of certain tRNAs, forming tRNA-cmnm(5)s(2)U34. This Bacillus velezensis (strain DSM 23117 / BGSC 10A6 / LMG 26770 / FZB42) (Bacillus amyloliquefaciens subsp. plantarum) protein is tRNA modification GTPase MnmE.